The primary structure comprises 147 residues: Fibromodulin (147 aa).

LRR repeat units follow at residues 1-15, 16-37, 40-61, 63-84, 85-105, and 108-128; these read LDHN…PLPR, SLRE…ALEG, NLTA…MRGL, SLIL…LPSA, LEQL…YFRG, and KLLY…ASNT. The N-linked (GlcNAc...) asparagine glycan is linked to asparagine 5. A glycan (N-linked (GlcNAc...) asparagine) is linked at asparagine 40. Asparagine 130 carries an N-linked (GlcNAc...) asparagine glycan. The stretch at 133 to 147 is one LRR 7 repeat; that stretch reads SLLELDLSYNQLQKI.

It belongs to the small leucine-rich proteoglycan (SLRP) family. SLRP class II subfamily. In terms of assembly, binds to type I and type II collagen. Post-translationally, binds keratan sulfate chains. Sulfated on tyrosine residues. In terms of processing, the N-terminus is blocked by a pyrrolidone carboxylic acid generated by post-translational modification of N-terminal glutamine.

Its subcellular location is the secreted. The protein resides in the extracellular space. It localises to the extracellular matrix. Functionally, affects the rate of fibrils formation. May have a primary role in collagen fibrillogenesis. This chain is Fibromodulin (FMOD), found in Oryctolagus cuniculus (Rabbit).